We begin with the raw amino-acid sequence, 143 residues long: Holo-[acyl-carrier-protein] synthase (143 aa).

Positions 9 and 63 each coordinate Mg(2+).

It belongs to the P-Pant transferase superfamily. AcpS family. Requires Mg(2+) as cofactor.

The protein localises to the cytoplasm. The enzyme catalyses apo-[ACP] + CoA = holo-[ACP] + adenosine 3',5'-bisphosphate + H(+). Its function is as follows. Transfers the 4'-phosphopantetheine moiety from coenzyme A to a Ser of acyl-carrier-protein. The protein is Holo-[acyl-carrier-protein] synthase of Burkholderia pseudomallei (strain 668).